The sequence spans 127 residues: Small ribosomal subunit protein uS12 (127 aa).

D89 carries the post-translational modification 3-methylthioaspartic acid.

It belongs to the universal ribosomal protein uS12 family. In terms of assembly, part of the 30S ribosomal subunit. Contacts proteins S8 and S17. May interact with IF1 in the 30S initiation complex.

Its function is as follows. With S4 and S5 plays an important role in translational accuracy. Functionally, interacts with and stabilizes bases of the 16S rRNA that are involved in tRNA selection in the A site and with the mRNA backbone. Located at the interface of the 30S and 50S subunits, it traverses the body of the 30S subunit contacting proteins on the other side and probably holding the rRNA structure together. The combined cluster of proteins S8, S12 and S17 appears to hold together the shoulder and platform of the 30S subunit. In Akkermansia muciniphila (strain ATCC BAA-835 / DSM 22959 / JCM 33894 / BCRC 81048 / CCUG 64013 / CIP 107961 / Muc), this protein is Small ribosomal subunit protein uS12.